Consider the following 235-residue polypeptide: Small ribosomal subunit protein uS3 (235 aa).

Positions 39–107 constitute a KH type-2 domain; sequence IREFIKEECK…ELHLNIVEVR (69 aa). The tract at residues 213–235 is disordered; it reads QARDRKAQELQDGPAPRGAGGRR.

It belongs to the universal ribosomal protein uS3 family. Part of the 30S ribosomal subunit. Forms a tight complex with proteins S10 and S14.

Functionally, binds the lower part of the 30S subunit head. Binds mRNA in the 70S ribosome, positioning it for translation. In Ruegeria pomeroyi (strain ATCC 700808 / DSM 15171 / DSS-3) (Silicibacter pomeroyi), this protein is Small ribosomal subunit protein uS3.